Here is a 777-residue protein sequence, read N- to C-terminus: Disintegrin and metalloproteinase domain-containing protein 5 (777 aa).

The first 16 residues, 1–16, serve as a signal peptide directing secretion; sequence MFLVLVLLTGLGRLYA. A propeptide spanning residues 17-142 is cleaved from the precursor; that stretch reads GNNPRKTFVQ…VLSGFTHMIY (126 aa). At 17–706 the chain is on the extracellular side; sequence GNNPRKTFVQ…RGYVVLSTKR (690 aa). N-linked (GlcNAc...) asparagine glycans are attached at residues Asn-49 and Asn-123. One can recognise a Peptidase M12B domain in the interval 185–382; sequence RYIDMYIVVN…YGLTCLRNTS (198 aa). 4 disulfide bridges follow: Cys-294/Cys-377, Cys-336/Cys-361, Cys-338/Cys-343, and Cys-456/Cys-477. The 90-residue stretch at 396–485 folds into the Disintegrin domain; sequence RRICGNSIRE…DCVHDTYAQN (90 aa). A glycan (N-linked (GlcNAc...) asparagine) is linked at Asn-566. The EGF-like domain maps to 633–667; sequence NNGSCNAEIHCQGRGICNNLDNCHCHKGFVPPECA. Disulfide bonds link Cys-637-Cys-649, Cys-643-Cys-655, and Cys-657-Cys-666. A helical membrane pass occupies residues 707-727; that stretch reads FQLIFYIGIPVIIIVAAILIK. At 728 to 777 the chain is on the cytoplasmic side; that stretch reads QNQLGKLFCRGEKEHMSSVSEDGSRSVTLSATESKFPADTEHSNKEEDAQ. The span at 744 to 760 shows a compositional bias: polar residues; the sequence is SSVSEDGSRSVTLSATE. The segment at 744–777 is disordered; sequence SSVSEDGSRSVTLSATESKFPADTEHSNKEEDAQ. Over residues 763–777 the composition is skewed to basic and acidic residues; sequence FPADTEHSNKEEDAQ.

Interacts with TEX101. In terms of processing, subject to proteolytic processing during epididymal transit of spermatozoa. Detected in testis.

The protein resides in the membrane. Its function is as follows. This is a non catalytic metalloprotease-like protein. May play a role in sperm-egg fusion. In Cavia porcellus (Guinea pig), this protein is Disintegrin and metalloproteinase domain-containing protein 5 (ADAM5).